We begin with the raw amino-acid sequence, 514 residues long: Beta-secretase 2 (514 aa).

Residues 1 to 20 (MGALLRALLLPLLAQWLLRA) form the signal peptide. The propeptide occupies 21–62 (VPVLAPAPFTLPLQVAGAANHRASTVPGLGTPELPRADGLAL). Topologically, residues 21–469 (VPVLAPAPFT…NEPILWIVSY (449 aa)) are extracellular. A Peptidase A1 domain is found at 88-425 (YYLEMLIGTP…DRAQRRVGFA (338 aa)). The active site involves aspartate 106. An N-linked (GlcNAc...) asparagine glycan is attached at asparagine 166. 3 disulfides stabilise this stretch: cysteine 229–cysteine 429, cysteine 288–cysteine 453, and cysteine 340–cysteine 389. Residue aspartate 299 is part of the active site. Residue asparagine 362 is glycosylated (N-linked (GlcNAc...) asparagine). Residues 470–490 (ALMSVCGAILLVLILLLLFPL) form a helical membrane-spanning segment. The Cytoplasmic segment spans residues 491 to 514 (HCRHAPRDPEVVNDESSLVRHRWK).

It belongs to the peptidase A1 family. As to quaternary structure, monomer. Interacts with RTN3 and RTN4. Post-translationally, undergoes autoproteolytic cleavage. Glycosylated.

It localises to the cell membrane. Its subcellular location is the golgi apparatus. It is found in the endoplasmic reticulum. The protein localises to the endosome. The protein resides in the melanosome. It carries out the reaction Broad endopeptidase specificity. Cleaves Glu-Val-Asn-Leu-|-Asp-Ala-Glu-Phe in the Swedish variant of Alzheimer's amyloid precursor protein.. Functionally, responsible for the proteolytic processing of the amyloid precursor protein (APP). Cleaves APP, between residues 690 and 691, leading to the generation and extracellular release of beta-cleaved soluble APP, and a corresponding cell-associated C-terminal fragment which is later released by gamma-secretase. It has also been shown that it can cleave APP between residues 671 and 672. Involved in the proteolytic shedding of PMEL at early stages of melanosome biogenesis. Cleaves PMEL within the M-beta fragment to release the amyloidogenic PMEL luminal fragment containing M-alpha and a small portion of M-beta N-terminus. This is a prerequisite step for subsequent processing and assembly of PMEL fibrils into amyloid sheets. Responsible also for the proteolytic processing of CLTRN in pancreatic beta cells. In Rattus norvegicus (Rat), this protein is Beta-secretase 2 (Bace2).